The following is a 123-amino-acid chain: Small ribosomal subunit protein uS12 (123 aa).

Position 89 is a 3-methylthioaspartic acid (Asp-89).

This sequence belongs to the universal ribosomal protein uS12 family. As to quaternary structure, part of the 30S ribosomal subunit. Contacts proteins S8 and S17. May interact with IF1 in the 30S initiation complex.

Functionally, with S4 and S5 plays an important role in translational accuracy. In terms of biological role, interacts with and stabilizes bases of the 16S rRNA that are involved in tRNA selection in the A site and with the mRNA backbone. Located at the interface of the 30S and 50S subunits, it traverses the body of the 30S subunit contacting proteins on the other side and probably holding the rRNA structure together. The combined cluster of proteins S8, S12 and S17 appears to hold together the shoulder and platform of the 30S subunit. This is Small ribosomal subunit protein uS12 from Rhodopseudomonas palustris (strain BisB18).